The following is a 138-amino-acid chain: Large ribosomal subunit protein uL16 (138 aa).

A compositionally biased stretch (basic residues) spans 1–13 (MLQPARRKYRKEQ). Positions 1-22 (MLQPARRKYRKEQKGRNTGVAT) are disordered.

This sequence belongs to the universal ribosomal protein uL16 family. As to quaternary structure, part of the 50S ribosomal subunit.

In terms of biological role, binds 23S rRNA and is also seen to make contacts with the A and possibly P site tRNAs. This Paracidovorax citrulli (strain AAC00-1) (Acidovorax citrulli) protein is Large ribosomal subunit protein uL16.